Consider the following 285-residue polypeptide: Inositol oxygenase (285 aa).

Residue arginine 29 participates in substrate binding. Serine 33 is modified (phosphoserine). Aspartate 85–serine 87 is a substrate binding site. Fe cation contacts are provided by histidine 98, histidine 123, and aspartate 124. Substrate-binding positions include lysine 127 and glycine 141–aspartate 142. Residues histidine 194, histidine 220, and aspartate 253 each contribute to the Fe cation site. Histidine 220–serine 221 is a binding site for substrate.

This sequence belongs to the myo-inositol oxygenase family. Fe cation serves as cofactor. As to expression, kidney specific.

It localises to the cytoplasm. The enzyme catalyses myo-inositol + O2 = D-glucuronate + H2O + H(+). It functions in the pathway polyol metabolism; myo-inositol degradation into D-glucuronate; D-glucuronate from myo-inositol: step 1/1. The chain is Inositol oxygenase (MIOX) from Homo sapiens (Human).